The sequence spans 165 residues: Large ribosomal subunit protein uL10 (165 aa).

It belongs to the universal ribosomal protein uL10 family. Part of the ribosomal stalk of the 50S ribosomal subunit. The N-terminus interacts with L11 and the large rRNA to form the base of the stalk. The C-terminus forms an elongated spine to which L12 dimers bind in a sequential fashion forming a multimeric L10(L12)X complex.

Forms part of the ribosomal stalk, playing a central role in the interaction of the ribosome with GTP-bound translation factors. The chain is Large ribosomal subunit protein uL10 from Buchnera aphidicola subsp. Schizaphis graminum (strain Sg).